Here is a 483-residue protein sequence, read N- to C-terminus: Glutamyl-tRNA(Gln) amidotransferase subunit A (483 aa).

Active-site charge relay system residues include K75 and S150. The active-site Acyl-ester intermediate is S174.

Belongs to the amidase family. GatA subfamily. In terms of assembly, heterotrimer of A, B and C subunits.

The enzyme catalyses L-glutamyl-tRNA(Gln) + L-glutamine + ATP + H2O = L-glutaminyl-tRNA(Gln) + L-glutamate + ADP + phosphate + H(+). Allows the formation of correctly charged Gln-tRNA(Gln) through the transamidation of misacylated Glu-tRNA(Gln) in organisms which lack glutaminyl-tRNA synthetase. The reaction takes place in the presence of glutamine and ATP through an activated gamma-phospho-Glu-tRNA(Gln). The sequence is that of Glutamyl-tRNA(Gln) amidotransferase subunit A from Gloeothece citriformis (strain PCC 7424) (Cyanothece sp. (strain PCC 7424)).